Reading from the N-terminus, the 247-residue chain is Chromosome partition protein MukE (247 aa).

A disordered region spans residues 213–247 (AQSLQEEKNGLKDNMDQSAVENEQYFENEENEGIA). The span at 217 to 227 (QEEKNGLKDNM) shows a compositional bias: basic and acidic residues. Acidic residues predominate over residues 236-247 (QYFENEENEGIA).

This sequence belongs to the MukE family. Interacts, and probably forms a ternary complex, with MukF and MukB. The complex formation is stimulated by calcium or magnesium.

The protein resides in the cytoplasm. The protein localises to the nucleoid. Its function is as follows. Involved in chromosome condensation, segregation and cell cycle progression. May participate in facilitating chromosome segregation by condensation DNA from both sides of a centrally located replisome during cell division. Probably acts via its interaction with MukB and MukF. The sequence is that of Chromosome partition protein MukE from Histophilus somni (strain 2336) (Haemophilus somnus).